The sequence spans 292 residues: 4-hydroxy-tetrahydrodipicolinate synthase (292 aa).

T45 is a binding site for pyruvate. The active-site Proton donor/acceptor is the Y133. K161 acts as the Schiff-base intermediate with substrate in catalysis. I203 contributes to the pyruvate binding site.

The protein belongs to the DapA family. In terms of assembly, homodimer.

The protein localises to the cytoplasm. It carries out the reaction L-aspartate 4-semialdehyde + pyruvate = (2S,4S)-4-hydroxy-2,3,4,5-tetrahydrodipicolinate + H2O + H(+). The protein operates within amino-acid biosynthesis; L-lysine biosynthesis via DAP pathway; (S)-tetrahydrodipicolinate from L-aspartate: step 3/4. Functionally, catalyzes the condensation of (S)-aspartate-beta-semialdehyde [(S)-ASA] and pyruvate to 4-hydroxy-tetrahydrodipicolinate (HTPA). The chain is 4-hydroxy-tetrahydrodipicolinate synthase from Pseudomonas savastanoi pv. phaseolicola (strain 1448A / Race 6) (Pseudomonas syringae pv. phaseolicola (strain 1448A / Race 6)).